The sequence spans 770 residues: Rho guanine nucleotide exchange factor 38 (770 aa).

The interval 33-88 is disordered; it reads KTDTVVDSSVSGDHSGSLRRSQSDRTEYNQKLQEKMTPQAECSSAETPTPEDEQQV. T34 bears the Phosphothreonine mark. Residues 37–47 show a composition bias toward low complexity; sequence VVDSSVSGDHS. Residues 53–66 show a composition bias toward basic and acidic residues; the sequence is SQSDRTEYNQKLQE. A DH domain is found at 94-285; it reads KRAKIIRELI…KDINVNINEL (192 aa). One can recognise a BAR domain in the interval 327-542; that stretch reads LKILTRGESQ…VHSLTFVKEN (216 aa). SH3 domains are found at residues 581–644 and 706–769; these read GAEE…PHNP and VDEQ…KMTY.

Its function is as follows. May act as a guanine-nucleotide releasing factor. The chain is Rho guanine nucleotide exchange factor 38 (Arhgef38) from Mus musculus (Mouse).